A 259-amino-acid polypeptide reads, in one-letter code: Pimeloyl-[acyl-carrier protein] methyl ester esterase (259 aa).

Substrate-binding positions include tryptophan 18, 78-79, and 139-143; these read SL and FLALD. Residue serine 78 is the Nucleophile of the active site. Active-site residues include aspartate 203 and histidine 231. Substrate is bound at residue histidine 231.

It belongs to the AB hydrolase superfamily. Carboxylesterase BioH family. In terms of assembly, monomer.

It localises to the cytoplasm. It catalyses the reaction 6-carboxyhexanoyl-[ACP] methyl ester + H2O = 6-carboxyhexanoyl-[ACP] + methanol + H(+). Its pathway is cofactor biosynthesis; biotin biosynthesis. The physiological role of BioH is to remove the methyl group introduced by BioC when the pimeloyl moiety is complete. It allows to synthesize pimeloyl-ACP via the fatty acid synthetic pathway through the hydrolysis of the ester bonds of pimeloyl-ACP esters. This chain is Pimeloyl-[acyl-carrier protein] methyl ester esterase, found in Stenotrophomonas maltophilia (strain R551-3).